The following is a 376-amino-acid chain: Erythronate-4-phosphate dehydrogenase (376 aa).

The substrate site is built by Ser-45 and Thr-67. NAD(+) is bound at residue Asp-147. The active site involves Arg-209. An NAD(+)-binding site is contributed by Asp-233. Residue Glu-238 is part of the active site. The active-site Proton donor is His-255. Gly-258 serves as a coordination point for NAD(+). Tyr-259 is a binding site for substrate.

This sequence belongs to the D-isomer specific 2-hydroxyacid dehydrogenase family. PdxB subfamily. As to quaternary structure, homodimer.

It localises to the cytoplasm. It carries out the reaction 4-phospho-D-erythronate + NAD(+) = (R)-3-hydroxy-2-oxo-4-phosphooxybutanoate + NADH + H(+). It functions in the pathway cofactor biosynthesis; pyridoxine 5'-phosphate biosynthesis; pyridoxine 5'-phosphate from D-erythrose 4-phosphate: step 2/5. In terms of biological role, catalyzes the oxidation of erythronate-4-phosphate to 3-hydroxy-2-oxo-4-phosphonooxybutanoate. In Shewanella halifaxensis (strain HAW-EB4), this protein is Erythronate-4-phosphate dehydrogenase.